The sequence spans 63 residues: Large ribosomal subunit protein bL35 (63 aa).

Belongs to the bacterial ribosomal protein bL35 family.

This chain is Large ribosomal subunit protein bL35, found in Campylobacter jejuni subsp. jejuni serotype O:2 (strain ATCC 700819 / NCTC 11168).